Here is a 361-residue protein sequence, read N- to C-terminus: Chorismate synthase (361 aa).

2 residues coordinate NADP(+): Arg-48 and Arg-54. FMN is bound by residues 125–127 (RSS), 238–239 (NA), Gly-278, 293–297 (KPTSS), and Arg-319.

The protein belongs to the chorismate synthase family. As to quaternary structure, homotetramer. FMNH2 serves as cofactor.

The enzyme catalyses 5-O-(1-carboxyvinyl)-3-phosphoshikimate = chorismate + phosphate. The protein operates within metabolic intermediate biosynthesis; chorismate biosynthesis; chorismate from D-erythrose 4-phosphate and phosphoenolpyruvate: step 7/7. Catalyzes the anti-1,4-elimination of the C-3 phosphate and the C-6 proR hydrogen from 5-enolpyruvylshikimate-3-phosphate (EPSP) to yield chorismate, which is the branch point compound that serves as the starting substrate for the three terminal pathways of aromatic amino acid biosynthesis. This reaction introduces a second double bond into the aromatic ring system. This chain is Chorismate synthase, found in Yersinia pseudotuberculosis serotype O:1b (strain IP 31758).